The sequence spans 437 residues: Aspartate aminotransferase, mitochondrial (437 aa).

L-aspartate is bound by residues Gly72, Trp167, and Asn220. Lys284 bears the N6-(pyridoxal phosphate)lysine mark. Arg413 provides a ligand contact to L-aspartate.

Belongs to the class-I pyridoxal-phosphate-dependent aminotransferase family. As to quaternary structure, homodimer. It depends on pyridoxal 5'-phosphate as a cofactor.

The protein resides in the mitochondrion matrix. The catalysed reaction is L-aspartate + 2-oxoglutarate = oxaloacetate + L-glutamate. Functionally, plays a key role in amino acid metabolism. Important for metabolite exchange between mitochondria and cytosol. The chain is Aspartate aminotransferase, mitochondrial from Schizosaccharomyces pombe (strain 972 / ATCC 24843) (Fission yeast).